We begin with the raw amino-acid sequence, 747 residues long: Rho GTPase-activating protein 24 (747 aa).

Disordered regions lie at residues 1 to 20 (MEER…KNTK) and 327 to 475 (FPKD…GTHS). A PH domain is found at 17 to 123 (KNTKCGWLRK…WVKSIRRVIW (107 aa)). In terms of domain architecture, Rho-GAP spans 133 to 327 (QKLEDTVRYE…VMISKHDRLF (195 aa)). Composition is skewed to polar residues over residues 334–346 (QSKP…SNNN) and 355–367 (GQLQ…NTKE). Serine 368, serine 390, serine 395, serine 397, serine 401, serine 412, serine 414, and serine 436 each carry phosphoserine. Positions 368-380 (SPVRRCSWDKPES) are enriched in basic and acidic residues. Polar residues predominate over residues 381–404 (PQRSSVDNGSPTALSGSKTNSPRN). Residues 431-475 (IVTNGSFSSSNAEGVEKPQTTPNGSLQARRTSSLKSSGTKMGTHS) show a composition bias toward polar residues. Position 451 is a phosphothreonine (threonine 451). Serine 494 is subject to Phosphoserine. Positions 581–639 (DFYVGNFEDPVLDGPPQDDLSHPGDYENKSDRRSVGGRSSRATSSSDNSETFVGNTSSN) are disordered. The segment covering 599 to 614 (DLSHPGDYENKSDRRS) has biased composition (basic and acidic residues). Over residues 616 to 629 (GGRSSRATSSSDNS) the composition is skewed to low complexity. Polar residues predominate over residues 630–639 (ETFVGNTSSN). Residues 648–728 (SSLKQEMTKQ…KEMEQFFSTF (81 aa)) are a coiled coil.

In terms of assembly, interacts with FLNA. Post-translationally, phosphorylated by ROCK, leading to activate the RacGAP activity.

The protein resides in the cytoplasm. The protein localises to the cytoskeleton. It is found in the cell junction. Its subcellular location is the adherens junction. It localises to the focal adhesion. The protein resides in the cell projection. Functionally, rho GTPase-activating protein involved in cell polarity, cell morphology and cytoskeletal organization. Acts as a GTPase activator for the Rac-type GTPase by converting it to an inactive GDP-bound state. Controls actin remodeling by inactivating Rac downstream of Rho leading to suppress leading edge protrusion and promotes cell retraction to achieve cellular polarity. Able to suppress RAC1 and CDC42 activity in vitro. Overexpression induces cell rounding with partial or complete disruption of actin stress fibers and formation of membrane ruffles, lamellipodia, and filopodia. Isoform 2 is a vascular cell-specific GAP involved in modulation of angiogenesis. This chain is Rho GTPase-activating protein 24 (Arhgap24), found in Mus musculus (Mouse).